The following is a 130-amino-acid chain: 3-aminoacrylate deaminase RutC (130 aa).

Belongs to the RutC family.

The enzyme catalyses (Z)-3-aminoacrylate + H2O + H(+) = 3-oxopropanoate + NH4(+). Involved in pyrimidine catabolism. Catalyzes the deamination of 3-aminoacrylate to malonic semialdehyde, a reaction that can also occur spontaneously. RutC may facilitate the reaction and modulate the metabolic fitness, rather than catalyzing essential functions. The sequence is that of 3-aminoacrylate deaminase RutC from Klebsiella variicola (strain At-22).